A 1065-amino-acid chain; its full sequence is WD repeat-containing protein on Y chromosome (1065 aa).

WD repeat units follow at residues 153-197, 326-365, 369-408, 459-498, 511-550, 598-638, 745-784, and 828-867; these read EEVT…IRTA, RVPLGVSTFFVAESHNIVVTGGPDTFVRIWDVYIPTEPSA, GHNGGIVMVFVQPEENKVYSVDYQKIIKVWDLQEHTLLQT, THAAPVSVVLYNRLFRNIVTCGLDSYIIVWDPWSGRRKII, IIDIEITAATFDPLEQFLLTGARDGTLKIWNYNNAVVVRN, FHTD…RRYS, KTGDCVLTMCTDRKNRYIYTGTAFGYIKVWHIVNYCVPEA, and AHLKAINSIAFINLPKIVFSGSHDYSCRLWTQGGRYLGTL. Over residues 915 to 925 the composition is skewed to basic and acidic residues; it reads PAKRAEVKAPE. Disordered regions lie at residues 915 to 936 and 1024 to 1065; these read PAKRAEVKAPEDRDEETAQTDD and GSAL…QQSE. Over residues 926 to 936 the composition is skewed to acidic residues; the sequence is DRDEETAQTDD.

This chain is WD repeat-containing protein on Y chromosome, found in Drosophila persimilis (Fruit fly).